A 269-amino-acid chain; its full sequence is Surfeit locus protein 4 (269 aa).

5 consecutive transmembrane segments (helical) span residues Leu64–Val84, Tyr92–Trp112, Phe179–Phe199, Leu203–Trp223, and Phe239–Gly259. The Di-lysine motif signature appears at Lys266–Trp269.

The protein belongs to the SURF4 family. In terms of assembly, found in a complex composed at least of SURF4, TMED2 and TMED10. May interact with LMAN1. Interacts with ZFYVE27 and with KIF5A in a ZFYVE27-dependent manner. Interacts with STING1. Interacts with SAR1B. Interacts with TMEM41B.

Its subcellular location is the endoplasmic reticulum membrane. The protein localises to the endoplasmic reticulum-Golgi intermediate compartment membrane. It is found in the golgi apparatus membrane. Endoplasmic reticulum cargo receptor that mediates the export of lipoproteins by recruiting cargos into COPII vesicles to facilitate their secretion. Acts as a cargo receptor for lipoproteins bearing both APOB and APOA1, thereby regulating lipoprotein delivery and the maintenance of lipid homeostasis. Synergizes with the GTPase SAR1B to mediate transport of circulating lipoproteins. Promotes the secretion of PCSK9. Also mediates the efficient secretion of erythropoietin (EPO). May also play a role in the maintenance of the architecture of the endoplasmic reticulum-Golgi intermediate compartment and of the Golgi. This is Surfeit locus protein 4 from Bos taurus (Bovine).